The sequence spans 107 residues: Age-related maculopathy susceptibility protein 2 (107 aa).

Residues 1–21 (MLRLYPGPMVTEAEGKGGPEM) form a disordered region.

Detected in retina and placenta.

It localises to the cytoplasm. The chain is Age-related maculopathy susceptibility protein 2 (ARMS2) from Homo sapiens (Human).